The sequence spans 729 residues: Catalase-peroxidase (729 aa).

Residues 1–20 form a disordered region; it reads MHNGSNGSVEQRDSMPETSR. Basic and acidic residues predominate over residues 10–20; it reads EQRDSMPETSR. Residues 91–214 constitute a cross-link (tryptophyl-tyrosyl-methioninium (Trp-Tyr) (with M-240)); that stretch reads WHAAGTYRTT…LGATVMGLIY (124 aa). Catalysis depends on H92, which acts as the Proton acceptor. Positions 214–240 form a cross-link, tryptophyl-tyrosyl-methioninium (Tyr-Met) (with W-91); the sequence is YVNPEGPESTPDPEWSAQRIRKSFGRM. H255 contributes to the heme b binding site.

Belongs to the peroxidase family. Peroxidase/catalase subfamily. In terms of assembly, homodimer or homotetramer. It depends on heme b as a cofactor. Formation of the three residue Trp-Tyr-Met cross-link is important for the catalase, but not the peroxidase activity of the enzyme.

It catalyses the reaction H2O2 + AH2 = A + 2 H2O. The enzyme catalyses 2 H2O2 = O2 + 2 H2O. Bifunctional enzyme with both catalase and broad-spectrum peroxidase activity. The sequence is that of Catalase-peroxidase from Salinibacter ruber (strain DSM 13855 / M31).